Reading from the N-terminus, the 379-residue chain is Cytochrome b (379 aa).

Helical transmembrane passes span 33–53 (FGSLLGMCLMIQILTGLFLAM), 77–98 (WLIRYLHANGASMFFICLFIHV), 113–133 (WNIGIILFLTTMATAFVGYVL), and 178–198 (FFAFHFILPFIITAFVLVHLL). Residues His83 and His97 each coordinate heme b. His182 and His196 together coordinate heme b. His201 contributes to the a ubiquinone binding site. The next 4 helical transmembrane spans lie at 226–246 (IKDLLGILFLLTALMILALFF), 288–308 (LGGVLALLLSILILMAFPLLN), 320–340 (ITQTIYWILIANLLVLTWIGG), and 347–367 (FTMIGQIASITYFAIILILMP).

Belongs to the cytochrome b family. In terms of assembly, the cytochrome bc1 complex contains 11 subunits: 3 respiratory subunits (MT-CYB, CYC1 and UQCRFS1), 2 core proteins (UQCRC1 and UQCRC2) and 6 low-molecular weight proteins (UQCRH/QCR6, UQCRB/QCR7, UQCRQ/QCR8, UQCR10/QCR9, UQCR11/QCR10 and a cleavage product of UQCRFS1). This cytochrome bc1 complex then forms a dimer. Requires heme b as cofactor.

It localises to the mitochondrion inner membrane. In terms of biological role, component of the ubiquinol-cytochrome c reductase complex (complex III or cytochrome b-c1 complex) that is part of the mitochondrial respiratory chain. The b-c1 complex mediates electron transfer from ubiquinol to cytochrome c. Contributes to the generation of a proton gradient across the mitochondrial membrane that is then used for ATP synthesis. The sequence is that of Cytochrome b (MT-CYB) from Akodon dolores (Dolorous grass mouse).